A 552-amino-acid chain; its full sequence is B-cell linker protein (552 aa).

The tract at residues Thr-50–Ala-431 is disordered. Basic and acidic residues predominate over residues Pro-67–Ala-76. Residues Asp-77–Asn-93 are compositionally biased toward acidic residues. Residues Tyr-91, Tyr-103, Tyr-115, Tyr-194, Tyr-205, and Tyr-249 each carry the phosphotyrosine; by SYK modification. The segment covering Ser-188–Tyr-205 has biased composition (acidic residues). 3 stretches are compositionally biased toward basic and acidic residues: residues Asn-277–Ala-295, Pro-309–His-322, and Asn-368–Ser-382. The region spanning Trp-442 to Val-549 is the SH2 domain.

In terms of assembly, associates with PLCG1, VAV1 and NCK1 in a B-cell antigen receptor-dependent fashion. Interacts through its SH2 domain with CD79A. Interacts with VAV3, PLCG2 and GRB2. Following BCR activation, phosphorylated on tyrosine residues by SYK and LYN. When phosphorylated, serves as a scaffold to assemble downstream targets of antigen activation, including PLCG1, VAV1, GRB2 and NCK1. Phosphorylation is required for both Ca(2+) and MAPK signaling pathways. Phosphorylation of Tyr-103, Tyr-194 and Tyr-205 facilitates PLCG1 binding. Phosphorylation of Tyr-115 facilitates BTK binding. Phosphorylation of Tyr-91 facilitates VAV1 and NCK1 binding. In terms of tissue distribution, highly expressed in the bursa, very low expression in ovary and spleen. Expression was variable among B-cell lines. Highly expressed in immature B-cell lines such as DT40 and CL18, low expression was seen in relatively mature B-cell lines, such as 293B9 and 249L4. No expression was seen in T-cell lines.

The protein resides in the cytoplasm. The protein localises to the cell membrane. Functions as a central linker protein, downstream of the B-cell receptor (BCR), bridging the SYK kinase to a multitude of signaling pathways and regulating biological outcomes of B-cell function and development. Plays a role in the activation of ERK/EPHB2, MAP kinase p38 and JNK. Modulates AP1 activation. Important for the activation of NF-kappa-B and NFAT. Plays an important role in BCR-mediated PLCG1 and PLCG2 activation and Ca(2+) mobilization and is required for trafficking of the BCR to late endosomes. However, does not seem to be required for pre-BCR-mediated activation of MAP kinase and phosphatidyl-inositol 3 (PI3) kinase signaling. May be required for the RAC1-JNK pathway. Plays a critical role in orchestrating the pro-B cell to pre-B cell transition. Plays a critical role in B-cell development in the bursa. Plays an important role in BCR-induced apoptosis. In Gallus gallus (Chicken), this protein is B-cell linker protein (BLNK).